The primary structure comprises 705 residues: ATP-dependent DNA helicase Q-like 2 (705 aa).

Residues 1–30 (MESEAIQEDLQNLDVELKDVQGQISALIEH) are a coiled coil. One can recognise a Helicase ATP-binding domain in the interval 98–273 (INAIMTGRDV…IEMLHIPKCV (176 aa)). 111 to 118 (MAAGGGKS) is an ATP binding site. The DEAH box motif lies at 217–220 (DEAH). Positions 298–450 (VVDEIAEFIR…DIVRYCQSKT (153 aa)) constitute a Helicase C-terminal domain. Positions 591–670 (SITFSGLELK…MRHEAVSEQL (80 aa)) constitute an HRDC domain. Residues 668-705 (EQLVEDPTKEETCKSRLRKRAKTQKDVVLVESSGEEEA) are disordered.

This sequence belongs to the helicase family. RecQ subfamily. Interacts with WEX. Requires Mg(2+) as cofactor. The cofactor is Mn(2+). In terms of tissue distribution, expressed in shoots and flowers. Expressed in young leaves, inflorescences, roots, shoot apical meristem, young siliques, and mature green siliques.

Its subcellular location is the nucleus. It carries out the reaction Couples ATP hydrolysis with the unwinding of duplex DNA by translocating in the 3'-5' direction.. It catalyses the reaction ATP + H2O = ADP + phosphate + H(+). Functionally, 3'-5' DNA helicase that may play a role in the repair of DNA. Its DNA unwinding activity in vitro is dependent on magnesium, and ATP or dATP. Can use GTP/dGTP, CTP/dCTP or UTP/dUTP as nucleotide cofactors. Catalyzes Holliday junction branch migration and replication fork regression. Disrupts D-loop structures. Unwinds G-quadruplex DNA, found in telomeric DNA. This is ATP-dependent DNA helicase Q-like 2 from Arabidopsis thaliana (Mouse-ear cress).